The following is a 610-amino-acid chain: T-cell immunomodulatory protein (610 aa).

A signal peptide spans 1–32; the sequence is MAAGLLPSARAVLALLFLGLALLSVGPAPAQA. N-linked (GlcNAc...) asparagine glycans are attached at residues Asn-35, Asn-94, Asn-123, Asn-138, Asn-145, Asn-150, Asn-175, and Asn-241. The FG-GAP 1; atypical repeat unit spans residues 98-135; that stretch reads LVTSVVPGDYDGDSQMDVLLTYFPQNHSNNELGAVIFW. The FG-GAP 2; atypical repeat unit spans residues 153-183; it reads FHDQPLIMDFNGDLIPDVFAITNESSQPQIL. One copy of the FG-GAP 3; atypical repeat lies at 256–291; it reads VVGQSAFADFDGDGHMDHLLPGCEDKDCQKSAIYLM. Asn-351, Asn-369, and Asn-480 each carry an N-linked (GlcNAc...) asparagine glycan. Residues 564–584 traverse the membrane as a helical segment; it reads IVLLTAVALTGVCVFILAIIA.

It belongs to the TIP family. As to quaternary structure, interacts with RUVBL1, RUVBL2 and alpha-tubulin.

Its subcellular location is the secreted. It is found in the cell membrane. Functionally, modulator of T-cell function. Has a protective effect in graft versus host disease model. The polypeptide is T-cell immunomodulatory protein (Rattus norvegicus (Rat)).